Here is a 3357-residue protein sequence, read N- to C-terminus: Versican core protein (3357 aa).

The N-terminal stretch at 1-23 is a signal peptide; it reads MLINMKGILWMCSTLLLTHALHQ. One can recognise an Ig-like V-type domain in the interval 24–146; sequence AKMETSPPVK…EDTQDTMSLA (123 aa). Intrachain disulfides connect Cys44-Cys130, Cys172-Cys243, Cys196-Cys217, Cys270-Cys333, and Cys294-Cys315. The N-linked (GlcNAc...) asparagine glycan is linked to Asn57. Link domains lie at 150 to 245 and 251 to 347; these read VVFH…YCYV and DVFH…YCFK. Asn330, Asn351, and Asn441 each carry an N-linked (GlcNAc...) asparagine glycan. The tract at residues 348-1308 is GAG-alpha (glucosaminoglycan attachment domain); it reads PKQNISEATT…IIEVRENKTG (961 aa). Positions 625–634 are enriched in basic and acidic residues; that stretch reads EPKTNGKVTE. A disordered region spans residues 625-646; the sequence is EPKTNGKVTEDEFGQSQPTTTF. The O-linked (Xyl...) (chondroitin sulfate) serine glycan is linked to Ser660. Disordered regions lie at residues 801-863 and 881-908; these read WPGD…KPLE and TSTS…TTST. A glycan (N-linked (GlcNAc...) asparagine) is linked at Asn807. N-linked (GlcNAc...) asparagine glycosylation is found at Asn914 and Asn951. Disordered stretches follow at residues 1010–1088 and 1252–1288; these read SPGA…YPPG and DHMT…PAAG. 2 stretches are compositionally biased toward polar residues: residues 1017–1042 and 1275–1286; these read TGVS…SSTA and SKTQELSTSTPA. N-linked (GlcNAc...) asparagine glycans are attached at residues Asn1305 and Asn1371. The interval 1309–3051 is GAG-beta; it reads RLSDMIVSGH…VEGTAVYLPG (1743 aa). Residues 1396 to 1406 are compositionally biased toward basic and acidic residues; sequence DPEAAEARRGQ. Disordered stretches follow at residues 1396–1421 and 1458–1524; these read DPEA…DSSA and TYPE…AIEQ. Polar residues-rich tracts occupy residues 1411–1421 and 1487–1498; these read APSQNFPDSSA and WSESITESSPNL. Ser1517 and Ser1599 each carry an O-linked (Xyl...) (chondroitin sulfate) serine glycan. The disordered stretch occupies residues 1664-1705; that stretch reads LPSPDARPTTVWNSNSTSEWVSDKSFEGRKKKENEDEEGAVN. Residues 1673 to 1683 are compositionally biased toward polar residues; the sequence is TVWNSNSTSEW. Asn1678 carries N-linked (GlcNAc...) asparagine glycosylation. The span at 1684–1697 shows a compositional bias: basic and acidic residues; sequence VSDKSFEGRKKKEN. Residues Ser1907 and Ser1931 are each glycosylated (O-linked (Xyl...) (chondroitin sulfate) serine). The disordered stretch occupies residues 1926–1965; it reads VGMGGSDDERVRDTQTSSSIPTTSDNIYPVPDSKGPDSTV. Over residues 1939–1951 the composition is skewed to polar residues; that stretch reads TQTSSSIPTTSDN. Residue Asn2053 is glycosylated (N-linked (GlcNAc...) asparagine). Residues Ser2219 and Ser2226 are each glycosylated (O-linked (Xyl...) (chondroitin sulfate) serine). An N-linked (GlcNAc...) asparagine glycan is attached at Asn2243. A compositionally biased stretch (polar residues) spans 2308–2322; sequence TLSHTGTEEPTTSTL. 2 disordered regions span residues 2308 to 2374 and 2475 to 2494; these read TLSH…ATSP and YPTS…EGIE. Residue Asn2361 is glycosylated (N-linked (GlcNAc...) asparagine). Low complexity predominate over residues 2475-2486; it reads YPTSTLPSTEPY. Phosphoserine is present on residues Ser2585 and Ser2586. Asn2626 carries an N-linked (GlcNAc...) asparagine glycan. Ser2696, Ser2697, and Ser2741 each carry an O-linked (Xyl...) (chondroitin sulfate) serine glycan. The tract at residues 2853-2908 is disordered; that stretch reads LGGNVHRTEPPSMSRDPALDVSEDESKHKLLEELETSPTKPETSQDFPNKAKDHIP. The segment covering 2888–2899 has biased composition (polar residues); sequence TSPTKPETSQDF. Asn3029 is a glycosylation site (N-linked (GlcNAc...) asparagine). Positions 3051–3087 constitute an EGF-like 1 domain; it reads GPDLCKTNPCLNGGTCYPTETSYVCTCAPGYSGDQCE. Disulfide bonds link Cys3055–Cys3066, Cys3060–Cys3075, Cys3077–Cys3086, Cys3093–Cys3104, Cys3098–Cys3113, Cys3115–Cys3124, Cys3131–Cys3142, Cys3159–Cys3251, Cys3227–Cys3243, Cys3258–Cys3301, and Cys3287–Cys3314. Positions 3089–3125 constitute an EGF-like 2; calcium-binding domain; the sequence is DFDECHSNPCRNGATCVDGFNTFRCLCLPSYVGALCE. The region spanning 3138–3252 is the C-type lectin domain; that stretch reads FQGQCYKYFA…CNYHLTYTCK (115 aa). Residues 3256 to 3316 enclose the Sushi domain; sequence VACGQPPVVE…WAMPKITCMN (61 aa). Residues Asn3331 and Asn3341 are each glycosylated (N-linked (GlcNAc...) asparagine). A compositionally biased stretch (polar residues) spans 3331–3342; sequence NSSSAKDNSINT. A disordered region spans residues 3331-3357; sequence NSSSAKDNSINTSKHEHRWSRRQETRR.

The protein belongs to the aggrecan/versican proteoglycan family. As to quaternary structure, interacts with FBLN1. Phosphorylated by FAM20C in the extracellular medium. Post-translationally, proteolytically cleaved by ADAMTS5 and ADAMTS15 in the pericellular matrix surrounding myoblasts, facilitating myoblast contact and fusion which is required for skeletal muscle development and regeneration. In terms of tissue distribution, expressed in the retina (at protein level). Isoform V2: Only expressed in brain.

The protein resides in the secreted. Its subcellular location is the extracellular space. It is found in the extracellular matrix. It localises to the cell projection. The protein localises to the cilium. The protein resides in the photoreceptor outer segment. Its subcellular location is the interphotoreceptor matrix. In terms of biological role, may play a role in intercellular signaling and in connecting cells with the extracellular matrix. May take part in the regulation of cell motility, growth and differentiation. Binds hyaluronic acid. This is Versican core protein (Vcan) from Mus musculus (Mouse).